The primary structure comprises 260 residues: HTH-type transcriptional repressor NanR (260 aa).

Residues 1–21 (MSAFDHSSDDTQETIGNSLRR) form a disordered region. In terms of domain architecture, HTH gntR-type spans 27–95 (KKLSEMVEEE…NGERARVSRP (69 aa)). Positions 55-74 (ERELMAFFNVGRPSVREALA) form a DNA-binding region, H-T-H motif.

This sequence belongs to the NanR family.

Functionally, transcriptional repressor that controls expression of the genes required for the catabolism of sialic acids. The sequence is that of HTH-type transcriptional repressor NanR from Klebsiella aerogenes (strain ATCC 13048 / DSM 30053 / CCUG 1429 / JCM 1235 / KCTC 2190 / NBRC 13534 / NCIMB 10102 / NCTC 10006 / CDC 819-56) (Enterobacter aerogenes).